The primary structure comprises 1402 residues: DNA-directed RNA polymerase subunit beta' (1402 aa).

Residues cysteine 71, cysteine 73, cysteine 86, and cysteine 89 each coordinate Zn(2+). Residues aspartate 462, aspartate 464, and aspartate 466 each coordinate Mg(2+). Zn(2+) is bound by residues cysteine 808, cysteine 881, cysteine 888, and cysteine 891.

It belongs to the RNA polymerase beta' chain family. The RNAP catalytic core consists of 2 alpha, 1 beta, 1 beta' and 1 omega subunit. When a sigma factor is associated with the core the holoenzyme is formed, which can initiate transcription. Mg(2+) is required as a cofactor. Zn(2+) serves as cofactor.

It carries out the reaction RNA(n) + a ribonucleoside 5'-triphosphate = RNA(n+1) + diphosphate. Its function is as follows. DNA-dependent RNA polymerase catalyzes the transcription of DNA into RNA using the four ribonucleoside triphosphates as substrates. This is DNA-directed RNA polymerase subunit beta' from Hyphomonas neptunium (strain ATCC 15444).